Here is an 829-residue protein sequence, read N- to C-terminus: Leucine--tRNA ligase (829 aa).

The 'HIGH' region signature appears at 34-44 (PYPSGNIHMGH). A 'KMSKS' region motif is present at residues 591-595 (KMSKS). ATP is bound at residue K594.

Belongs to the class-I aminoacyl-tRNA synthetase family.

It is found in the cytoplasm. The enzyme catalyses tRNA(Leu) + L-leucine + ATP = L-leucyl-tRNA(Leu) + AMP + diphosphate. This Ehrlichia chaffeensis (strain ATCC CRL-10679 / Arkansas) protein is Leucine--tRNA ligase.